Here is a 632-residue protein sequence, read N- to C-terminus: 2-oxoacid:ferredoxin oxidoreductase subunit alpha (632 aa).

Residues 254–258 (YPITP) carry the YPITP motif motif. Substrate is bound by residues Thr257 and Arg345.

In terms of assembly, heterodimer composed of an alpha and a beta subunit.

It carries out the reaction a 2-oxocarboxylate + 2 oxidized [2Fe-2S]-[ferredoxin] + CoA = an acyl-CoA + 2 reduced [2Fe-2S]-[ferredoxin] + CO2 + H(+). Functionally, catalyzes the coenzyme A-dependent oxidative decarboxylation of different 2-oxoacids such as 2-oxoglutarate, pyruvate and 2-oxobutyrate to form their CoA derivatives. This is 2-oxoacid:ferredoxin oxidoreductase subunit alpha from Saccharolobus solfataricus (Sulfolobus solfataricus).